We begin with the raw amino-acid sequence, 986 residues long: Epidermin biosynthesis protein EpiB (986 aa).

The protein to B.subtilis SpaB and L.lactis NisB.

It is found in the cell membrane. Involved in the post-translational modification of the lantibiotic epidermin. This is Epidermin biosynthesis protein EpiB (epiB) from Staphylococcus epidermidis.